Here is an 89-residue protein sequence, read N- to C-terminus: uncharacterized protein (89 aa).

The HTH arsR-type domain occupies methionine 1–leucine 89.

This is an uncharacterized protein from Methanocaldococcus jannaschii (strain ATCC 43067 / DSM 2661 / JAL-1 / JCM 10045 / NBRC 100440) (Methanococcus jannaschii).